Here is a 264-residue protein sequence, read N- to C-terminus: Tryptophan synthase alpha chain (264 aa).

Catalysis depends on proton acceptor residues glutamate 45 and aspartate 56.

It belongs to the TrpA family. Tetramer of two alpha and two beta chains.

The catalysed reaction is (1S,2R)-1-C-(indol-3-yl)glycerol 3-phosphate + L-serine = D-glyceraldehyde 3-phosphate + L-tryptophan + H2O. Its pathway is amino-acid biosynthesis; L-tryptophan biosynthesis; L-tryptophan from chorismate: step 5/5. The alpha subunit is responsible for the aldol cleavage of indoleglycerol phosphate to indole and glyceraldehyde 3-phosphate. The protein is Tryptophan synthase alpha chain of Leptospira interrogans serogroup Icterohaemorrhagiae serovar copenhageni (strain Fiocruz L1-130).